A 187-amino-acid polypeptide reads, in one-letter code: uncharacterized protein (187 aa).

Basic and acidic residues predominate over residues 139-168 (ESKDRKALKNAARKAEKNAHEESSYFRVDD). The segment at 139–172 (ESKDRKALKNAARKAEKNAHEESSYFRVDDPEPE) is disordered.

This is an uncharacterized protein from Caenorhabditis elegans.